A 281-amino-acid polypeptide reads, in one-letter code: Pantothenate synthetase (281 aa).

Position 30-37 (30-37 (MGNLHQGH)) interacts with ATP. His-37 functions as the Proton donor in the catalytic mechanism. Gln-61 contacts (R)-pantoate. Gln-61 lines the beta-alanine pocket. Residue 149–152 (GNKD) coordinates ATP. Gln-155 contributes to the (R)-pantoate binding site. ATP contacts are provided by residues Ile-178 and 186–189 (MSSR).

This sequence belongs to the pantothenate synthetase family. As to quaternary structure, homodimer.

It localises to the cytoplasm. The catalysed reaction is (R)-pantoate + beta-alanine + ATP = (R)-pantothenate + AMP + diphosphate + H(+). It functions in the pathway cofactor biosynthesis; (R)-pantothenate biosynthesis; (R)-pantothenate from (R)-pantoate and beta-alanine: step 1/1. In terms of biological role, catalyzes the condensation of pantoate with beta-alanine in an ATP-dependent reaction via a pantoyl-adenylate intermediate. In Shewanella baltica (strain OS223), this protein is Pantothenate synthetase.